We begin with the raw amino-acid sequence, 277 residues long: Sulfur carrier protein FdhD (277 aa).

Cys121 functions as the Cysteine persulfide intermediate in the catalytic mechanism. 260 to 265 is a binding site for Mo-bis(molybdopterin guanine dinucleotide); that stretch reads FCKPGR.

Belongs to the FdhD family.

Its subcellular location is the cytoplasm. Functionally, required for formate dehydrogenase (FDH) activity. Acts as a sulfur carrier protein that transfers sulfur from IscS to the molybdenum cofactor prior to its insertion into FDH. This is Sulfur carrier protein FdhD from Escherichia coli O81 (strain ED1a).